The sequence spans 131 residues: Heat shock protein 15 homolog (131 aa).

An S4 RNA-binding domain is found at valine 6–alanine 67. The segment at alanine 98–glutamate 131 is disordered. Over residues histidine 108–glutamate 131 the composition is skewed to basic and acidic residues.

The protein belongs to the HSP15 family.

Functionally, involved in the recycling of free 50S ribosomal subunits that still carry a nascent chain. Binds RNA more specifically than DNA. Binds with very high affinity to the free 50S ribosomal subunit. Does not bind it when it is part of the 70S ribosome. The polypeptide is Heat shock protein 15 homolog (hslR) (Haemophilus influenzae (strain ATCC 51907 / DSM 11121 / KW20 / Rd)).